We begin with the raw amino-acid sequence, 348 residues long: tRNA N6-adenosine threonylcarbamoyltransferase (348 aa).

Fe cation contacts are provided by H118 and H122. Substrate is bound by residues 140–144 (LVSGG), D173, G186, D190, and N279. D309 is a binding site for Fe cation.

It belongs to the KAE1 / TsaD family. Fe(2+) is required as a cofactor.

The protein resides in the cytoplasm. It carries out the reaction L-threonylcarbamoyladenylate + adenosine(37) in tRNA = N(6)-L-threonylcarbamoyladenosine(37) in tRNA + AMP + H(+). Its function is as follows. Required for the formation of a threonylcarbamoyl group on adenosine at position 37 (t(6)A37) in tRNAs that read codons beginning with adenine. Is involved in the transfer of the threonylcarbamoyl moiety of threonylcarbamoyl-AMP (TC-AMP) to the N6 group of A37, together with TsaE and TsaB. TsaD likely plays a direct catalytic role in this reaction. The chain is tRNA N6-adenosine threonylcarbamoyltransferase from Lactiplantibacillus plantarum (strain ATCC BAA-793 / NCIMB 8826 / WCFS1) (Lactobacillus plantarum).